The following is a 554-amino-acid chain: Acetyl-S-ACP:malonate ACP transferase (554 aa).

It is found in the cytoplasm. The catalysed reaction is acetyl-[ACP] + malonate = malonyl-[ACP] + acetate. Alpha subunit of the biotin-independent and biotin-dependent malonate decarboxylase multienzyme complex (EC 4.1.1.88 and EC 7.2.4.4, respectively). Acts as an acyl-carrier protein (ACP) transferase component. This first step in malonate decarboxylation involves the exchange of an acetyl thioester residue bound to the activated ACP subunit for a malonyl thioester residue. Has a weak activity with acetyl-CoA as substrate. This chain is Acetyl-S-ACP:malonate ACP transferase (madA), found in Malonomonas rubra.